Consider the following 80-residue polypeptide: U4-theraphotoxin-Spl1a (80 aa).

An N-terminal signal peptide occupies residues 1-21; that stretch reads MKASLFAVIFGLVVLCACSFA. Residues 22-50 constitute a propeptide that is removed on maturation; the sequence is EDQFASPNELLKSMFVESTHELTPEVEGR. Cystine bridges form between Cys52–Cys66, Cys59–Cys71, and Cys65–Cys75. Leu79 carries the post-translational modification Leucine amide.

The protein belongs to the neurotoxin 30 (phrixotoxin) family. Expressed by the venom gland.

The protein resides in the secreted. Functionally, probable ion channel inhibitor. Shows insecticidal activity when injected into mealworms. The sequence is that of U4-theraphotoxin-Spl1a from Selenotypus plumipes (Australian featherleg tarantula).